The sequence spans 131 residues: MATRHQVRNAVVSLLYAKEMGSEMNDFVSEYLEEKRIRNDQRKFADKLFNGVCKNVNQIDNELDKYLNEYKISQIGTVERAILRLGAYEIMYEAIDKAIIINEAIELAKELAGESSPKFINGVLDRIGKVK.

It belongs to the NusB family.

Its function is as follows. Involved in transcription antitermination. Required for transcription of ribosomal RNA (rRNA) genes. Binds specifically to the boxA antiterminator sequence of the ribosomal RNA (rrn) operons. The sequence is that of Transcription antitermination protein NusB from Campylobacter hominis (strain ATCC BAA-381 / DSM 21671 / CCUG 45161 / LMG 19568 / NCTC 13146 / CH001A).